Consider the following 408-residue polypeptide: Exodeoxyribonuclease 7 large subunit (408 aa).

It belongs to the XseA family. In terms of assembly, heterooligomer composed of large and small subunits.

The protein resides in the cytoplasm. It carries out the reaction Exonucleolytic cleavage in either 5'- to 3'- or 3'- to 5'-direction to yield nucleoside 5'-phosphates.. Bidirectionally degrades single-stranded DNA into large acid-insoluble oligonucleotides, which are then degraded further into small acid-soluble oligonucleotides. This chain is Exodeoxyribonuclease 7 large subunit, found in Alkaliphilus oremlandii (strain OhILAs) (Clostridium oremlandii (strain OhILAs)).